A 53-amino-acid chain; its full sequence is Lectin alpha chain (53 aa).

It belongs to the leguminous lectin family. Tetramer of two alpha and two beta chains.

This is Lectin alpha chain from Lathyrus clymenum (Spanish vetchling).